The chain runs to 360 residues: Phenylalanine--tRNA ligase alpha subunit (360 aa).

Glutamate 260 lines the Mg(2+) pocket.

It belongs to the class-II aminoacyl-tRNA synthetase family. Phe-tRNA synthetase alpha subunit type 1 subfamily. As to quaternary structure, tetramer of two alpha and two beta subunits. Mg(2+) serves as cofactor.

The protein localises to the cytoplasm. It catalyses the reaction tRNA(Phe) + L-phenylalanine + ATP = L-phenylalanyl-tRNA(Phe) + AMP + diphosphate + H(+). This Bradyrhizobium sp. (strain ORS 278) protein is Phenylalanine--tRNA ligase alpha subunit.